A 378-amino-acid polypeptide reads, in one-letter code: Protein-glutamate methylesterase/protein-glutamine glutaminase 2 (378 aa).

A Response regulatory domain is found at 4 to 121 (KVLVVDDSGF…SRNPEKVKQL (118 aa)). The residue at position 55 (D55) is a 4-aspartylphosphate. Positions 141–188 (APAPAAAPTPAPIPAAAPSSFGSHSAPARPAPAPAPTRAPAASASSPA) are disordered. A compositionally biased stretch (pro residues) spans 145–155 (AAAPTPAPIPA). Composition is skewed to low complexity over residues 156–168 (AAPS…SAPA) and 178–188 (RAPAASASSPA). Residues 187 to 378 (PAPKRKNYKL…IGKHIVEACV (192 aa)) enclose the CheB-type methylesterase domain. Catalysis depends on residues S202, H229, and D322.

This sequence belongs to the CheB family. In terms of processing, phosphorylated by CheA. Phosphorylation of the N-terminal regulatory domain activates the methylesterase activity.

It localises to the cytoplasm. The enzyme catalyses [protein]-L-glutamate 5-O-methyl ester + H2O = L-glutamyl-[protein] + methanol + H(+). It carries out the reaction L-glutaminyl-[protein] + H2O = L-glutamyl-[protein] + NH4(+). Its function is as follows. Involved in chemotaxis. Part of a chemotaxis signal transduction system that modulates chemotaxis in response to various stimuli. Catalyzes the demethylation of specific methylglutamate residues introduced into the chemoreceptors (methyl-accepting chemotaxis proteins or MCP) by CheR. Also mediates the irreversible deamidation of specific glutamine residues to glutamic acid. In Pseudomonas fluorescens (strain Pf0-1), this protein is Protein-glutamate methylesterase/protein-glutamine glutaminase 2.